Reading from the N-terminus, the 161-residue chain is uncharacterized protein (161 aa).

Transmembrane regions (helical) follow at residues 13 to 35 and 40 to 62; these read VAAV…PHAN and VFSA…PFIS.

The protein resides in the cell membrane. This is an uncharacterized protein from Archaeoglobus fulgidus (strain ATCC 49558 / DSM 4304 / JCM 9628 / NBRC 100126 / VC-16).